The chain runs to 502 residues: Glycerol kinase (502 aa).

Residue Thr14 coordinates ADP. ATP contacts are provided by Thr14, Thr15, and Ser16. A sn-glycerol 3-phosphate-binding site is contributed by Thr14. Arg18 lines the ADP pocket. Residues Arg84, Glu85, Tyr136, and Asp246 each contribute to the sn-glycerol 3-phosphate site. Residues Arg84, Glu85, Tyr136, Asp246, and Gln247 each coordinate glycerol. The ADP site is built by Thr268 and Gly311. Residues Thr268, Gly311, Gln315, and Gly412 each contribute to the ATP site. ADP is bound by residues Gly412 and Asn416.

It belongs to the FGGY kinase family. As to quaternary structure, homotetramer and homodimer (in equilibrium). Heterodimer with EIIA-Glc. Binds 1 zinc ion per glycerol kinase EIIA-Glc dimer. The zinc ion is important for dimerization.

It carries out the reaction glycerol + ATP = sn-glycerol 3-phosphate + ADP + H(+). It participates in polyol metabolism; glycerol degradation via glycerol kinase pathway; sn-glycerol 3-phosphate from glycerol: step 1/1. Activity of this regulatory enzyme is affected by several metabolites. Allosterically and non-competitively inhibited by fructose 1,6-bisphosphate (FBP) and unphosphorylated phosphocarrier protein EIIA-Glc (III-Glc), an integral component of the bacterial phosphotransferase (PTS) system. Its function is as follows. Key enzyme in the regulation of glycerol uptake and metabolism. Catalyzes the phosphorylation of glycerol to yield sn-glycerol 3-phosphate. The protein is Glycerol kinase of Citrobacter koseri (strain ATCC BAA-895 / CDC 4225-83 / SGSC4696).